The primary structure comprises 754 residues: Phosphoribosylformylglycinamidine synthase subunit PurL (754 aa).

His52 is a catalytic residue. The ATP site is built by Tyr55 and Lys95. Position 97 (Glu97) interacts with Mg(2+). Substrate is bound by residues 98–101 (SHNH) and Arg120. His99 acts as the Proton acceptor in catalysis. Position 121 (Asp121) interacts with Mg(2+). Gln244 contributes to the substrate binding site. Position 272 (Asp272) interacts with Mg(2+). Substrate is bound at residue 316–318 (ESQ). The ATP site is built by Asn504 and Gly541. Asn542 is a binding site for Mg(2+). Position 544 (Ser544) interacts with substrate.

Belongs to the FGAMS family. In terms of assembly, monomer. Part of the FGAM synthase complex composed of 1 PurL, 1 PurQ and 2 PurS subunits.

The protein resides in the cytoplasm. The enzyme catalyses N(2)-formyl-N(1)-(5-phospho-beta-D-ribosyl)glycinamide + L-glutamine + ATP + H2O = 2-formamido-N(1)-(5-O-phospho-beta-D-ribosyl)acetamidine + L-glutamate + ADP + phosphate + H(+). The protein operates within purine metabolism; IMP biosynthesis via de novo pathway; 5-amino-1-(5-phospho-D-ribosyl)imidazole from N(2)-formyl-N(1)-(5-phospho-D-ribosyl)glycinamide: step 1/2. Functionally, part of the phosphoribosylformylglycinamidine synthase complex involved in the purines biosynthetic pathway. Catalyzes the ATP-dependent conversion of formylglycinamide ribonucleotide (FGAR) and glutamine to yield formylglycinamidine ribonucleotide (FGAM) and glutamate. The FGAM synthase complex is composed of three subunits. PurQ produces an ammonia molecule by converting glutamine to glutamate. PurL transfers the ammonia molecule to FGAR to form FGAM in an ATP-dependent manner. PurS interacts with PurQ and PurL and is thought to assist in the transfer of the ammonia molecule from PurQ to PurL. The polypeptide is Phosphoribosylformylglycinamidine synthase subunit PurL (Salinibacter ruber (strain DSM 13855 / M31)).